A 200-amino-acid chain; its full sequence is Protein GrpE (200 aa).

Residues 1–11 (MTDNDGQKDFS) are compositionally biased toward basic and acidic residues. Residues 1-43 (MTDNDGQKDFSEAAAENAGSKPGEPRVSKPYIMPDDPEETPSE) are disordered.

The protein belongs to the GrpE family. Homodimer.

Its subcellular location is the cytoplasm. Participates actively in the response to hyperosmotic and heat shock by preventing the aggregation of stress-denatured proteins, in association with DnaK and GrpE. It is the nucleotide exchange factor for DnaK and may function as a thermosensor. Unfolded proteins bind initially to DnaJ; upon interaction with the DnaJ-bound protein, DnaK hydrolyzes its bound ATP, resulting in the formation of a stable complex. GrpE releases ADP from DnaK; ATP binding to DnaK triggers the release of the substrate protein, thus completing the reaction cycle. Several rounds of ATP-dependent interactions between DnaJ, DnaK and GrpE are required for fully efficient folding. In Afipia carboxidovorans (strain ATCC 49405 / DSM 1227 / KCTC 32145 / OM5) (Oligotropha carboxidovorans), this protein is Protein GrpE.